A 121-amino-acid chain; its full sequence is Glycine cleavage system H protein (121 aa).

In terms of domain architecture, Lipoyl-binding spans valine 16–lysine 98. Lysine 57 carries the N6-lipoyllysine modification.

It belongs to the GcvH family. In terms of assembly, the glycine cleavage system is composed of four proteins: P, T, L and H. (R)-lipoate is required as a cofactor.

In terms of biological role, the glycine cleavage system catalyzes the degradation of glycine. The H protein shuttles the methylamine group of glycine from the P protein to the T protein. The sequence is that of Glycine cleavage system H protein from Caulobacter vibrioides (strain NA1000 / CB15N) (Caulobacter crescentus).